Here is a 194-residue protein sequence, read N- to C-terminus: uncharacterized protein (194 aa).

CBS domains are found at residues 13–72 and 78–133; these read MSFP…PKDV and MSKK…LLEI. The ACP-type MB domain maps to 159–192; that stretch reads YINGICENCGYQGRVRLYQGRYLCDECIEEFEEK. Fe cation contacts are provided by cysteine 164, cysteine 167, cysteine 182, and cysteine 185. The Zn(2+) site is built by cysteine 164, cysteine 167, cysteine 182, and cysteine 185.

This is an uncharacterized protein from Methanocaldococcus jannaschii (strain ATCC 43067 / DSM 2661 / JAL-1 / JCM 10045 / NBRC 100440) (Methanococcus jannaschii).